The chain runs to 350 residues: Uroporphyrinogen decarboxylase (350 aa).

Substrate-binding positions include 27 to 31, Phe-46, Asp-76, Tyr-152, Ser-207, and His-321; that span reads RQAGR.

The protein belongs to the uroporphyrinogen decarboxylase family. Homodimer.

The protein localises to the cytoplasm. The catalysed reaction is uroporphyrinogen III + 4 H(+) = coproporphyrinogen III + 4 CO2. Its pathway is porphyrin-containing compound metabolism; protoporphyrin-IX biosynthesis; coproporphyrinogen-III from 5-aminolevulinate: step 4/4. Functionally, catalyzes the decarboxylation of four acetate groups of uroporphyrinogen-III to yield coproporphyrinogen-III. This Listeria innocua serovar 6a (strain ATCC BAA-680 / CLIP 11262) protein is Uroporphyrinogen decarboxylase.